Reading from the N-terminus, the 397-residue chain is S-layer protein B (397 aa).

Residues 1–24 (MVVKKTFVLSTLILISVVALVSTA) form the signal peptide. Residues 259 to 314 (INALNNEVSTLRSEISSLNSTIASLNKSLANANTQISNLQSEITTLNSEIGKLNST) are a coiled coil. The chain crosses the membrane as a helical span at residues 373–393 (GGIIAGIIGLIVAIVAIVLVM).

This sequence belongs to the Sulfolobales SlaB family. The mushroom-shaped unit cells of the Sulfolobales' S-layers may consist of three SlaB subunits and six SlaA subunits.

It localises to the secreted. It is found in the cell wall. The protein resides in the S-layer. Its subcellular location is the cell membrane. Its function is as follows. S-layer small protein. May anchor the complex to the cell membrane. This Saccharolobus solfataricus (strain ATCC 35092 / DSM 1617 / JCM 11322 / P2) (Sulfolobus solfataricus) protein is S-layer protein B.